Here is a 164-residue protein sequence, read N- to C-terminus: ATP synthase subunit b 1 (164 aa).

The chain crosses the membrane as a helical span at residues 8-28 (PETWVAVAFVILMGVFAYFGV).

Belongs to the ATPase B chain family. As to quaternary structure, F-type ATPases have 2 components, F(1) - the catalytic core - and F(0) - the membrane proton channel. F(1) has five subunits: alpha(3), beta(3), gamma(1), delta(1), epsilon(1). F(0) has three main subunits: a(1), b(2) and c(10-14). The alpha and beta chains form an alternating ring which encloses part of the gamma chain. F(1) is attached to F(0) by a central stalk formed by the gamma and epsilon chains, while a peripheral stalk is formed by the delta and b chains.

Its subcellular location is the cell inner membrane. F(1)F(0) ATP synthase produces ATP from ADP in the presence of a proton or sodium gradient. F-type ATPases consist of two structural domains, F(1) containing the extramembraneous catalytic core and F(0) containing the membrane proton channel, linked together by a central stalk and a peripheral stalk. During catalysis, ATP synthesis in the catalytic domain of F(1) is coupled via a rotary mechanism of the central stalk subunits to proton translocation. Functionally, component of the F(0) channel, it forms part of the peripheral stalk, linking F(1) to F(0). This Rhodopseudomonas palustris (strain BisB18) protein is ATP synthase subunit b 1.